Reading from the N-terminus, the 202-residue chain is Holliday junction branch migration complex subunit RuvA (202 aa).

The segment at 1–65 (MIAYVEGRLA…EDALELYGFA (65 aa)) is domain I. Residues 66–144 (TWDERQTFIV…VEDLPAAAPL (79 aa)) form a domain II region. The interval 145 to 155 (VTGGAPGGVFR) is flexible linker. The tract at residues 155–202 (RDALAGLANLGYGEEEASHVLKEVLHGEPDLDVGGALRAALRALARGR) is domain III.

The protein belongs to the RuvA family. In terms of assembly, homotetramer. Forms an RuvA(8)-RuvB(12)-Holliday junction (HJ) complex. HJ DNA is sandwiched between 2 RuvA tetramers; dsDNA enters through RuvA and exits via RuvB. An RuvB hexamer assembles on each DNA strand where it exits the tetramer. Each RuvB hexamer is contacted by two RuvA subunits (via domain III) on 2 adjacent RuvB subunits; this complex drives branch migration. In the full resolvosome a probable DNA-RuvA(4)-RuvB(12)-RuvC(2) complex forms which resolves the HJ.

The protein resides in the cytoplasm. The RuvA-RuvB-RuvC complex processes Holliday junction (HJ) DNA during genetic recombination and DNA repair, while the RuvA-RuvB complex plays an important role in the rescue of blocked DNA replication forks via replication fork reversal (RFR). RuvA specifically binds to HJ cruciform DNA, conferring on it an open structure. The RuvB hexamer acts as an ATP-dependent pump, pulling dsDNA into and through the RuvAB complex. HJ branch migration allows RuvC to scan DNA until it finds its consensus sequence, where it cleaves and resolves the cruciform DNA. The sequence is that of Holliday junction branch migration complex subunit RuvA from Nitratidesulfovibrio vulgaris (strain DP4) (Desulfovibrio vulgaris).